Reading from the N-terminus, the 444-residue chain is Alanyl-tRNA editing protein Aarsd1 (444 aa).

Positions 109 and 113 each coordinate Zn(2+). The residue at position 174 (serine 174) is a Phosphoserine. Residues cysteine 209 and histidine 213 each coordinate Zn(2+).

Belongs to the class-II aminoacyl-tRNA synthetase family. Alax-L subfamily. Zn(2+) is required as a cofactor.

It localises to the cytoplasm. In terms of biological role, functions in trans to edit the amino acid moiety from incorrectly charged tRNA(Ala). This chain is Alanyl-tRNA editing protein Aarsd1 (AARSD1), found in Bos taurus (Bovine).